Consider the following 424-residue polypeptide: MWENVKKTDPEIYDVILKEWERQEYGLELIASENFASLAVIEAMGSVLTNKYAEGYPGRRYYGGCEWVDVAEKLARDRAKELFNVKYANVQPHSGSQANMGAYFAVSEPGDTIMGMSLSHGGHLTHGASVNFSGRIYNVVPYGVNPETEVIDYDEVRDLALKHKPKIIVAGGSAYSRIIDFKKFREIADEVGAYLIVDMAHFAGLVAAGIYPNPAEYAHIVTSTTHKTLRGPRGGMILTNDNELYKAINKSIFPGIQGGPLMHVIAAKAVCFKEALTDEFKEYQKQVVKNAKTLAAELEKRGLRIVSGGTDTHLMLVDLNPLNVTGKAAEIALGKCHITVNKNTIPNETRSPFIASGIRLGTPALTTRGMKESEMEEIAELIVDVLKHVKDEEGNVDEEIVEKTQKKVKDLCTRFPLYEGKIKL.

(6S)-5,6,7,8-tetrahydrofolate contacts are provided by residues Leu-118 and 122-124 (GHL). Lys-227 carries the post-translational modification N6-(pyridoxal phosphate)lysine. Residues Glu-243 and 351–353 (SPF) each bind (6S)-5,6,7,8-tetrahydrofolate.

This sequence belongs to the SHMT family. As to quaternary structure, homodimer. Pyridoxal 5'-phosphate serves as cofactor.

The protein resides in the cytoplasm. It carries out the reaction (6R)-5,10-methylene-5,6,7,8-tetrahydrofolate + glycine + H2O = (6S)-5,6,7,8-tetrahydrofolate + L-serine. The protein operates within one-carbon metabolism; tetrahydrofolate interconversion. It participates in amino-acid biosynthesis; glycine biosynthesis; glycine from L-serine: step 1/1. Its function is as follows. Catalyzes the reversible interconversion of serine and glycine with tetrahydrofolate (THF) serving as the one-carbon carrier. This reaction serves as the major source of one-carbon groups required for the biosynthesis of purines, thymidylate, methionine, and other important biomolecules. Also exhibits THF-independent aldolase activity toward beta-hydroxyamino acids, producing glycine and aldehydes, via a retro-aldol mechanism. The protein is Serine hydroxymethyltransferase of Thermosipho africanus (strain TCF52B).